The following is a 352-amino-acid chain: Quinolinate synthase (352 aa).

Iminosuccinate contacts are provided by His-48 and Ser-69. A [4Fe-4S] cluster-binding site is contributed by Cys-114. Iminosuccinate contacts are provided by residues 140 to 142 (YAN) and Ser-157. Cys-201 is a [4Fe-4S] cluster binding site. Iminosuccinate contacts are provided by residues 227–229 (HPE) and Thr-244. Residue Cys-298 participates in [4Fe-4S] cluster binding.

Belongs to the quinolinate synthase family. Type 1 subfamily. [4Fe-4S] cluster is required as a cofactor.

The protein localises to the cytoplasm. The catalysed reaction is iminosuccinate + dihydroxyacetone phosphate = quinolinate + phosphate + 2 H2O + H(+). The protein operates within cofactor biosynthesis; NAD(+) biosynthesis; quinolinate from iminoaspartate: step 1/1. In terms of biological role, catalyzes the condensation of iminoaspartate with dihydroxyacetone phosphate to form quinolinate. The sequence is that of Quinolinate synthase from Pseudomonas putida (strain GB-1).